We begin with the raw amino-acid sequence, 545 residues long: CTP synthase (545 aa).

An amidoligase domain region spans residues 1–267 (MTKFIFVTGG…AEQVLNLLQM (267 aa)). Residue Ser13 participates in CTP binding. Ser13 contacts UTP. Residues 14-19 (SIGKGI) and Asp71 contribute to the ATP site. Mg(2+)-binding residues include Asp71 and Glu141. Residues 148 to 150 (DIE), 188 to 193 (KTKPTQ), and Lys224 each bind CTP. UTP contacts are provided by residues 188 to 193 (KTKPTQ) and Lys224. The 243-residue stretch at 292–534 (EIAIVGKYVQ…IQAAIALSLS (243 aa)) folds into the Glutamine amidotransferase type-1 domain. Residue Gly354 coordinates L-glutamine. Cys381 functions as the Nucleophile; for glutamine hydrolysis in the catalytic mechanism. L-glutamine contacts are provided by residues 382-385 (LGMQ), Glu405, and Arg462. Active-site residues include His507 and Glu509.

It belongs to the CTP synthase family. As to quaternary structure, homotetramer.

The enzyme catalyses UTP + L-glutamine + ATP + H2O = CTP + L-glutamate + ADP + phosphate + 2 H(+). It catalyses the reaction L-glutamine + H2O = L-glutamate + NH4(+). The catalysed reaction is UTP + NH4(+) + ATP = CTP + ADP + phosphate + 2 H(+). It participates in pyrimidine metabolism; CTP biosynthesis via de novo pathway; CTP from UDP: step 2/2. Allosterically activated by GTP, when glutamine is the substrate; GTP has no effect on the reaction when ammonia is the substrate. The allosteric effector GTP functions by stabilizing the protein conformation that binds the tetrahedral intermediate(s) formed during glutamine hydrolysis. Inhibited by the product CTP, via allosteric rather than competitive inhibition. Functionally, catalyzes the ATP-dependent amination of UTP to CTP with either L-glutamine or ammonia as the source of nitrogen. Regulates intracellular CTP levels through interactions with the four ribonucleotide triphosphates. The sequence is that of CTP synthase from Nostoc punctiforme (strain ATCC 29133 / PCC 73102).